Consider the following 177-residue polypeptide: Small ribosomal subunit protein uS5 (177 aa).

Residues 21–84 form the S5 DRBM domain; the sequence is LLDRVVKIKR…KQASRSMIHV (64 aa).

Belongs to the universal ribosomal protein uS5 family. In terms of assembly, part of the 30S ribosomal subunit. Contacts proteins S4 and S8.

In terms of biological role, with S4 and S12 plays an important role in translational accuracy. Functionally, located at the back of the 30S subunit body where it stabilizes the conformation of the head with respect to the body. This is Small ribosomal subunit protein uS5 from Rhodopirellula baltica (strain DSM 10527 / NCIMB 13988 / SH1).